Consider the following 197-residue polypeptide: Small ribosomal subunit protein uS4y (197 aa).

The S4 RNA-binding domain maps to 109 to 183 (RRLQTIVFKS…VKRRNERAGA (75 aa)). The segment at 161–197 (SLTSPFGGGRPGRVKRRNERAGAKKASGGDGDEDDEE) is disordered.

The protein belongs to the universal ribosomal protein uS4 family. As to quaternary structure, binds to the translation initiation factors TIF3E1.

The sequence is that of Small ribosomal subunit protein uS4y (RPS9C) from Arabidopsis thaliana (Mouse-ear cress).